The following is a 187-amino-acid chain: Lysozyme 3 (187 aa).

The first 18 residues, 1–18 (MNGLFLFCVATTAALAYG), serve as a signal peptide directing secretion. The I-type lysozyme domain maps to 68 to 183 (TGIVSQQCLQ…WSHVHAQGCS (116 aa)). Intrachain disulfides connect Cys-75-Cys-151, Cys-80-Cys-86, Cys-91-Cys-100, Cys-113-Cys-133, Cys-123-Cys-129, and Cys-147-Cys-165. Glu-83 serves as the catalytic Proton donor. The active-site Nucleophile is the Asp-94. 106-112 (KEGYWHD) is a binding site for substrate. Residues Tyr-137 and 158 to 160 (HNG) each bind substrate.

In terms of tissue distribution, highest levels of expression detected in the digestive glands. Lower levels in the mantle, labial palps, gills and style-midgut sac, and lowest levels detected in the hemocytes. Not detected in the gonads.

It is found in the secreted. The catalysed reaction is Hydrolysis of (1-&gt;4)-beta-linkages between N-acetylmuramic acid and N-acetyl-D-glucosamine residues in a peptidoglycan and between N-acetyl-D-glucosamine residues in chitodextrins.. Functionally, has antibacterial activity against the Gram-negative bacterium E.coli. No antibacterial activity detected against the Gram-negative bacterium V.vulnificus. The polypeptide is Lysozyme 3 (Crassostrea virginica (Eastern oyster)).